Consider the following 355-residue polypeptide: dTDP-D-glucose 4,6-dehydratase (355 aa).

Thr-142 contributes to the substrate binding site. Asp-143 (proton donor) is an active-site residue. Residues Glu-144 and Tyr-166 each act as proton acceptor in the active site.

Belongs to the NAD(P)-dependent epimerase/dehydratase family. dTDP-glucose dehydratase subfamily. NAD(+) serves as cofactor.

The catalysed reaction is dTDP-alpha-D-glucose = dTDP-4-dehydro-6-deoxy-alpha-D-glucose + H2O. The chain is dTDP-D-glucose 4,6-dehydratase (Tgds) from Mus musculus (Mouse).